The sequence spans 792 residues: Probable CoA-transferase Rv1866 (792 aa).

Catalysis depends on D558, which acts as the Nucleophile.

This sequence belongs to the CoA-transferase III family.

Probable CoA-transferase. In Mycobacterium tuberculosis (strain ATCC 25618 / H37Rv), this protein is Probable CoA-transferase Rv1866.